The following is a 191-amino-acid chain: Protein Ves (191 aa).

It belongs to the Ves family.

This is Protein Ves from Escherichia coli O8 (strain IAI1).